Consider the following 259-residue polypeptide: uncharacterized protein (259 aa).

Disordered regions lie at residues 22-68 (GLQP…VSFG), 111-133 (REEQ…DEVE), and 181-202 (LGGK…KKKQ). Residues 50–63 (NEEEDAISDMEDKE) are compositionally biased toward acidic residues. Ser127 bears the Phosphoserine mark.

This is an uncharacterized protein from Schizosaccharomyces pombe (strain 972 / ATCC 24843) (Fission yeast).